Consider the following 300-residue polypeptide: B1 kinase (300 aa).

A Protein kinase domain is found at W16–F282. ATP-binding positions include I22–I30 and K45. The active-site Proton acceptor is D147.

This sequence belongs to the protein kinase superfamily. Ser/Thr protein kinase family. Poxviruses subfamily. Interacts with host JIP1; this interaction increases the amount of MAPK bound to JIP1 and subsequently increases the activity of transcription factors, such as JUN, that respond to these complexes. Interacts with protein OPG198; this interaction inhibits the repressive activity of OPG198 pseudokinase on viral replication factory formation. Mg(2+) serves as cofactor. In terms of processing, autophosphorylated.

The protein resides in the virion. The protein localises to the host cytoplasm. It carries out the reaction L-seryl-[protein] + ATP = O-phospho-L-seryl-[protein] + ADP + H(+). It catalyses the reaction L-threonyl-[protein] + ATP = O-phospho-L-threonyl-[protein] + ADP + H(+). In terms of biological role, essential serine/threonine-protein kinase that plays different role in the viral life cycle. Phosphorylates the host small ribosomal protein RACK1 thereby customizing the ribosomes to a state optimal for viral mRNAs (which contain poly-A leaders) but not for host mRNAs. Facilitates viral DNA replication by inhibiting host BANF1, a cellular host defense responsive to foreign DNA. Phosphorylates host BANF1 on serine and threonine residues; this leads to BANF1 relocalization to the cytoplasm, loss of dimerization and impaired DNA binding activity. Indeed, BANF1 activity depends on its DNA-binding property which is blocked by VPK1-mediated phosphorylation. Required for viral intermediate genes expression, probably by inhibiting host BANF1. Modulates cellular responses via host JUN by two different mechanisms, either by direct phosphorylation or by modulation of upstream JIP1-MAPK complexes. Seems to participate in the accumulation/processing of late proteins and thus in virion maturation. In addition, inhibits B12 repressive activity on viral DNA replication via a phosphorylation-dependent mechanism. In Vaccinia virus (strain Ankara) (VACV), this protein is B1 kinase (OPG187).